A 319-amino-acid chain; its full sequence is GTP cyclohydrolase MptA (319 aa).

This sequence belongs to the GTP cyclohydrolase IV family. In terms of assembly, homodimer. Fe(2+) serves as cofactor.

The catalysed reaction is GTP + H2O = 7,8-dihydroneopterin 2',3'-cyclic phosphate + formate + diphosphate + H(+). Its pathway is cofactor biosynthesis; 5,6,7,8-tetrahydromethanopterin biosynthesis. Its function is as follows. Converts GTP to 7,8-dihydro-D-neopterin 2',3'-cyclic phosphate, the first intermediate in the biosynthesis of coenzyme methanopterin. The chain is GTP cyclohydrolase MptA from Methanosarcina barkeri (strain Fusaro / DSM 804).